The following is a 133-amino-acid chain: Thioredoxin-like protein CXXS1 (133 aa).

One can recognise a Thioredoxin domain in the interval 1-120 (MEIQQQKGVG…VKKMVDASAE (120 aa)).

Belongs to the thioredoxin family.

The polypeptide is Thioredoxin-like protein CXXS1 (Oryza sativa subsp. japonica (Rice)).